The chain runs to 597 residues: Aspartate--tRNA(Asp/Asn) ligase (597 aa).

Glu182 is an L-aspartate binding site. The tract at residues 206–209 (QLFK) is aspartate. Arg228 is an L-aspartate binding site. ATP is bound by residues 228-230 (RDE) and Gln237. His455 lines the L-aspartate pocket. Glu489 lines the ATP pocket. Arg496 is an L-aspartate binding site. 541–544 (GFDR) contributes to the ATP binding site.

Belongs to the class-II aminoacyl-tRNA synthetase family. Type 1 subfamily. In terms of assembly, homodimer.

It localises to the cytoplasm. It carries out the reaction tRNA(Asx) + L-aspartate + ATP = L-aspartyl-tRNA(Asx) + AMP + diphosphate. Aspartyl-tRNA synthetase with relaxed tRNA specificity since it is able to aspartylate not only its cognate tRNA(Asp) but also tRNA(Asn). Reaction proceeds in two steps: L-aspartate is first activated by ATP to form Asp-AMP and then transferred to the acceptor end of tRNA(Asp/Asn). This chain is Aspartate--tRNA(Asp/Asn) ligase, found in Desulfosudis oleivorans (strain DSM 6200 / JCM 39069 / Hxd3) (Desulfococcus oleovorans).